The following is a 680-amino-acid chain: Fermitin family homolog 2 (680 aa).

Positions 40–81 (HIGGVMLKLVEKLDVKKDWSDHALWWEKKRTWLLKTHWTLDK) are interaction with membranes containing phosphatidylinositol phosphate. The disordered stretch occupies residues 141-165 (LKKPRDPTKKKKKKLDDQSEDEALE). Residues S159, S181, S339, and S351 each carry the phosphoserine modification. The FERM domain maps to 189–661 (MTPTYDAHDG…GYIFLSTRAK (473 aa)). In terms of domain architecture, PH spans 380–476 (KVFKPKKLTL…WMAACRLASK (97 aa)). K383 is an a 1,2-diacyl-sn-glycero-3-phospho-(1D-myo-inositol-3,4,5-trisphosphate) binding site. Phosphoserine is present on S666.

The protein belongs to the kindlin family. Interacts with ILK. Interacts with FBLIM1. Interacts with ITGB1 and ITGB3. Interacts with active, unphosphorylated CTNNB1. Identified in a complex with CTNNB1 and TCF7L2/TCF4. Interacts with ITGB1; the interaction is inhibited in presence of ITGB1BP1. As to expression, ubiquitous. Found in numerous tumor tissues.

Its subcellular location is the cytoplasm. It localises to the cell cortex. The protein localises to the cytoskeleton. It is found in the stress fiber. The protein resides in the cell junction. Its subcellular location is the focal adhesion. It localises to the membrane. The protein localises to the cell projection. It is found in the lamellipodium membrane. The protein resides in the nucleus. Its subcellular location is the myofibril. It localises to the sarcomere. The protein localises to the i band. It is found in the cell surface. In terms of biological role, scaffolding protein that enhances integrin activation mediated by TLN1 and/or TLN2, but activates integrins only weakly by itself. Binds to membranes enriched in phosphoinositides. Enhances integrin-mediated cell adhesion onto the extracellular matrix and cell spreading; this requires both its ability to interact with integrins and with phospholipid membranes. Required for the assembly of focal adhesions. Participates in the connection between extracellular matrix adhesion sites and the actin cytoskeleton and also in the orchestration of actin assembly and cell shape modulation. Recruits FBLIM1 to focal adhesions. Plays a role in the TGFB1 and integrin signaling pathways. Stabilizes active CTNNB1 and plays a role in the regulation of transcription mediated by CTNNB1 and TCF7L2/TCF4 and in Wnt signaling. The polypeptide is Fermitin family homolog 2 (FERMT2) (Homo sapiens (Human)).